Here is a 455-residue protein sequence, read N- to C-terminus: Membrane protein Pbs54 (455 aa).

Residues Ile12–Phe32 traverse the membrane as a helical segment. N-linked (GlcNAc...) asparagine glycans are attached at residues Asn41, Asn102, and Asn125. 6 consecutive transmembrane segments (helical) span residues Ile181–Gly201, Phe220–Ile240, Ile244–Phe264, Ile285–Ile305, Phe312–Leu332, and Phe346–Ile366. Asn373 is a glycosylation site (N-linked (GlcNAc...) asparagine). Residues Asn398 to Ile418 form a helical membrane-spanning segment.

Its subcellular location is the cell projection. The protein resides in the cilium. It localises to the flagellum. The protein localises to the cell membrane. Functionally, plays a role in gamete fertilization. Required for the successful transmission of parasites to mosquito. The sequence is that of Membrane protein Pbs54 from Plasmodium berghei (strain Anka).